The following is a 200-amino-acid chain: Imidazoleglycerol-phosphate dehydratase (200 aa).

The protein belongs to the imidazoleglycerol-phosphate dehydratase family.

The protein resides in the cytoplasm. It catalyses the reaction D-erythro-1-(imidazol-4-yl)glycerol 3-phosphate = 3-(imidazol-4-yl)-2-oxopropyl phosphate + H2O. It participates in amino-acid biosynthesis; L-histidine biosynthesis; L-histidine from 5-phospho-alpha-D-ribose 1-diphosphate: step 6/9. This chain is Imidazoleglycerol-phosphate dehydratase, found in Chlorobium phaeobacteroides (strain DSM 266 / SMG 266 / 2430).